We begin with the raw amino-acid sequence, 278 residues long: Urease accessory protein UreD (278 aa).

The protein belongs to the UreD family. UreD, UreF and UreG form a complex that acts as a GTP-hydrolysis-dependent molecular chaperone, activating the urease apoprotein by helping to assemble the nickel containing metallocenter of UreC. The UreE protein probably delivers the nickel.

It is found in the cytoplasm. In terms of biological role, required for maturation of urease via the functional incorporation of the urease nickel metallocenter. This is Urease accessory protein UreD from Leptothrix cholodnii (strain ATCC 51168 / LMG 8142 / SP-6) (Leptothrix discophora (strain SP-6)).